We begin with the raw amino-acid sequence, 365 residues long: Protein RecA (365 aa).

Residue 81-88 (GPESSGKT) participates in ATP binding.

The protein belongs to the RecA family.

The protein resides in the cytoplasm. Functionally, can catalyze the hydrolysis of ATP in the presence of single-stranded DNA, the ATP-dependent uptake of single-stranded DNA by duplex DNA, and the ATP-dependent hybridization of homologous single-stranded DNAs. It interacts with LexA causing its activation and leading to its autocatalytic cleavage. In Borreliella afzelii (strain PKo) (Borrelia afzelii), this protein is Protein RecA.